Consider the following 477-residue polypeptide: Bifunctional protein HldE (477 aa).

The segment at 1-318 (MKVTLPEFER…ENAVRGRADT (318 aa)) is ribokinase. 195–198 (NLSE) is an ATP binding site. D264 is a catalytic residue. Residues 344 to 477 (MTNGVFDILH…IKKIQKDSDK (134 aa)) form a cytidylyltransferase region.

This sequence in the N-terminal section; belongs to the carbohydrate kinase PfkB family. The protein in the C-terminal section; belongs to the cytidylyltransferase family. Homodimer.

The catalysed reaction is D-glycero-beta-D-manno-heptose 7-phosphate + ATP = D-glycero-beta-D-manno-heptose 1,7-bisphosphate + ADP + H(+). It catalyses the reaction D-glycero-beta-D-manno-heptose 1-phosphate + ATP + H(+) = ADP-D-glycero-beta-D-manno-heptose + diphosphate. Its pathway is nucleotide-sugar biosynthesis; ADP-L-glycero-beta-D-manno-heptose biosynthesis; ADP-L-glycero-beta-D-manno-heptose from D-glycero-beta-D-manno-heptose 7-phosphate: step 1/4. The protein operates within nucleotide-sugar biosynthesis; ADP-L-glycero-beta-D-manno-heptose biosynthesis; ADP-L-glycero-beta-D-manno-heptose from D-glycero-beta-D-manno-heptose 7-phosphate: step 3/4. Functionally, catalyzes the phosphorylation of D-glycero-D-manno-heptose 7-phosphate at the C-1 position to selectively form D-glycero-beta-D-manno-heptose-1,7-bisphosphate. In terms of biological role, catalyzes the ADP transfer from ATP to D-glycero-beta-D-manno-heptose 1-phosphate, yielding ADP-D-glycero-beta-D-manno-heptose. In Citrobacter koseri (strain ATCC BAA-895 / CDC 4225-83 / SGSC4696), this protein is Bifunctional protein HldE.